We begin with the raw amino-acid sequence, 67 residues long: uncharacterized protein (67 aa).

Helical transmembrane passes span 10-32 (NLSH…TAFI) and 44-66 (ATLT…MGQW).

The protein resides in the cell membrane. This is an uncharacterized protein from Archaeoglobus fulgidus (strain ATCC 49558 / DSM 4304 / JCM 9628 / NBRC 100126 / VC-16).